The primary structure comprises 280 residues: Fasciclin-like arabinogalactan protein 3 (280 aa).

An N-terminal signal peptide occupies residues 1–24 (MGLKVSSSLLCLTILLAVSSIVSA). Positions 25-169 (VNITRVLEKY…LSVVQISMPI (145 aa)) constitute an FAS1 domain. N-linked (GlcNAc...) asparagine glycans are attached at residues asparagine 26, asparagine 126, and asparagine 159. Residues 180 to 193 (VPPPPPMSSPPAPS) are compositionally biased toward pro residues. A disordered region spans residues 180–262 (VPPPPPMSSP…EPPSSASNTG (83 aa)). Residues 219–234 (APETAPASAPSESDSP) are compositionally biased toward low complexity. The GPI-anchor amidated serine moiety is linked to residue serine 256. Residues 257–280 (SASNTGLSFGAVLVLGFVASFVGF) constitute a propeptide, removed in mature form.

The protein belongs to the fasciclin-like AGP family.

The protein resides in the cell membrane. In terms of biological role, may be a cell surface adhesion protein. The polypeptide is Fasciclin-like arabinogalactan protein 3 (FLA3) (Arabidopsis thaliana (Mouse-ear cress)).